Here is a 243-residue protein sequence, read N- to C-terminus: Vesicle-associated membrane protein-associated protein B (243 aa).

Ala2 carries the N-acetylalanine modification. The Cytoplasmic portion of the chain corresponds to 2–218 (AKVEQVLSLE…AALAASGKEE (217 aa)). One can recognise an MSP domain in the interval 7–124 (VLSLEPQHEL…MDSKLRCVFE (118 aa)). The residue at position 146 (Ser146) is a Phosphoserine. Residue Lys147 forms a Glycyl lysine isopeptide (Lys-Gly) (interchain with G-Cter in SUMO1) linkage. Ser159 carries the phosphoserine modification. Residues 161–196 (LDDAEVKKVMEECRRLQGEVQRLREESRQLKEEDGL) are a coiled coil. A Phosphoserine modification is found at Ser206. Residues 219-239 (GLSARLLALVVLFFIVGVIIG) form a helical; Anchor for type IV membrane protein membrane-spanning segment.

The protein belongs to the VAMP-associated protein (VAP) (TC 9.B.17) family. Homodimer, and heterodimer with VAPA. Interacts with VAMP1 and VAMP2. Interacts (via MSP domain) with ZFYVE27. Interacts with RMDN3. Interacts with KIF5A in a ZFYVE27-dependent manner. Interacts (via MSP domain) with STARD3 (via phospho-FFAT motif). Interacts with STARD3NL (via FFAT motif). Interacts with CERT1. Interacts with PLEKHA3 and SACM1L to form a ternary complex. Interacts with VPS13A (via FFAT motif). Interacts with RB1CC1 (via phosphorylated FFAT motif), MIGA2 (via phosphorylated FFAT motif), RMDN3 (via phosphorylated FFAT motif), OSBPL1A (via FFAT motif), KCNB1 (via phosphorylated FFAT motif) and KCNB2 (via phosphorylated FFAT motif). Interacts (via MSP domain) with WDR44; the interactions connect the endoplasmic reticulum (ER) with the endosomal tubule. In terms of tissue distribution, ubiquitous.

Its subcellular location is the endoplasmic reticulum membrane. In terms of biological role, endoplasmic reticulum (ER)-anchored protein that mediates the formation of contact sites between the ER and endosomes via interaction with FFAT motif-containing proteins such as STARD3 or WDR44. Interacts with STARD3 in a FFAT motif phosphorylation dependent manner. Via interaction with WDR44 participates in neosynthesized protein export. Participates in the endoplasmic reticulum unfolded protein response (UPR) by inducing ERN1/IRE1 activity. Involved in cellular calcium homeostasis regulation. The protein is Vesicle-associated membrane protein-associated protein B of Rattus norvegicus (Rat).